We begin with the raw amino-acid sequence, 242 residues long: ATP-dependent dethiobiotin synthetase BioD (242 aa).

12 to 17 (EVGKTV) contacts ATP. Residue Thr16 coordinates Mg(2+). Lys37 is a catalytic residue. Residue Ser41 participates in substrate binding. Residues Asp51 and 112–115 (EGAG) each bind ATP. Asp51 and Glu112 together coordinate Mg(2+).

Belongs to the dethiobiotin synthetase family. Homodimer. It depends on Mg(2+) as a cofactor.

It localises to the cytoplasm. It carries out the reaction (7R,8S)-7,8-diammoniononanoate + CO2 + ATP = (4R,5S)-dethiobiotin + ADP + phosphate + 3 H(+). It participates in cofactor biosynthesis; biotin biosynthesis; biotin from 7,8-diaminononanoate: step 1/2. In terms of biological role, catalyzes a mechanistically unusual reaction, the ATP-dependent insertion of CO2 between the N7 and N8 nitrogen atoms of 7,8-diaminopelargonic acid (DAPA, also called 7,8-diammoniononanoate) to form a ureido ring. The chain is ATP-dependent dethiobiotin synthetase BioD from Bacillus thuringiensis (strain Al Hakam).